The sequence spans 195 residues: Imidazoleglycerol-phosphate dehydratase (195 aa).

The protein belongs to the imidazoleglycerol-phosphate dehydratase family.

It is found in the cytoplasm. It catalyses the reaction D-erythro-1-(imidazol-4-yl)glycerol 3-phosphate = 3-(imidazol-4-yl)-2-oxopropyl phosphate + H2O. The protein operates within amino-acid biosynthesis; L-histidine biosynthesis; L-histidine from 5-phospho-alpha-D-ribose 1-diphosphate: step 6/9. This Citrifermentans bemidjiense (strain ATCC BAA-1014 / DSM 16622 / JCM 12645 / Bem) (Geobacter bemidjiensis) protein is Imidazoleglycerol-phosphate dehydratase.